A 62-amino-acid polypeptide reads, in one-letter code: Large ribosomal subunit protein uL29 (62 aa).

Belongs to the universal ribosomal protein uL29 family.

The sequence is that of Large ribosomal subunit protein uL29 from Geobacter sp. (strain M21).